A 283-amino-acid chain; its full sequence is Homeobox protein Hox-C12b (283 aa).

A DNA-binding region (homeobox) is located at residues 215–274 (TRKKRKPYSKLQLNELEGEFILNEFITRQRRRELSDRLNLTDQQVKIWFQNRRMKKKRLL).

It belongs to the Abd-B homeobox family.

It is found in the nucleus. In terms of biological role, sequence-specific transcription factor which is part of a developmental regulatory system that provides cells with specific positional identities on the anterior-posterior axis. The polypeptide is Homeobox protein Hox-C12b (hoxc12b) (Danio rerio (Zebrafish)).